The following is a 137-amino-acid chain: Peptide methionine sulfoxide reductase MsrB (137 aa).

The region spanning 7 to 129 is the MsrB domain; the sequence is PGELKNGLSE…NSASLSFTDE (123 aa). 4 residues coordinate Zn(2+): Cys46, Cys49, Cys95, and Cys98. Cys118 functions as the Nucleophile in the catalytic mechanism.

The protein belongs to the MsrB Met sulfoxide reductase family. Requires Zn(2+) as cofactor.

The enzyme catalyses L-methionyl-[protein] + [thioredoxin]-disulfide + H2O = L-methionyl-(R)-S-oxide-[protein] + [thioredoxin]-dithiol. The polypeptide is Peptide methionine sulfoxide reductase MsrB (Klebsiella pneumoniae (strain 342)).